The chain runs to 262 residues: Mlc titration factor A (262 aa).

Zn(2+) contacts are provided by H111, H148, H152, and E211.

The protein belongs to the MtfA family. Interacts with Mlc. The cofactor is Zn(2+).

It localises to the cytoplasm. Functionally, involved in the modulation of the activity of the glucose-phosphotransferase system (glucose-PTS). Interacts with the transcriptional repressor Mlc, preventing its interaction with DNA and leading to the modulation of expression of genes regulated by Mlc, including ptsG, which encodes the PTS system glucose-specific EIICB component. In terms of biological role, shows zinc-dependent metallopeptidase activity. This Serratia proteamaculans (strain 568) protein is Mlc titration factor A.